We begin with the raw amino-acid sequence, 64 residues long: Large ribosomal subunit protein bL28 (64 aa).

The protein belongs to the bacterial ribosomal protein bL28 family.

The sequence is that of Large ribosomal subunit protein bL28 from Bifidobacterium adolescentis (strain ATCC 15703 / DSM 20083 / NCTC 11814 / E194a).